The sequence spans 253 residues: 3-deoxy-manno-octulosonate cytidylyltransferase (253 aa).

This sequence belongs to the KdsB family.

It localises to the cytoplasm. It carries out the reaction 3-deoxy-alpha-D-manno-oct-2-ulosonate + CTP = CMP-3-deoxy-beta-D-manno-octulosonate + diphosphate. It participates in nucleotide-sugar biosynthesis; CMP-3-deoxy-D-manno-octulosonate biosynthesis; CMP-3-deoxy-D-manno-octulosonate from 3-deoxy-D-manno-octulosonate and CTP: step 1/1. The protein operates within bacterial outer membrane biogenesis; lipopolysaccharide biosynthesis. Functionally, activates KDO (a required 8-carbon sugar) for incorporation into bacterial lipopolysaccharide in Gram-negative bacteria. This chain is 3-deoxy-manno-octulosonate cytidylyltransferase, found in Neisseria meningitidis serogroup B (strain ATCC BAA-335 / MC58).